The primary structure comprises 114 residues: Cytokine SCM-1 beta (114 aa).

The N-terminal stretch at 1-21 is a signal peptide; it reads MRLLILALLGICSLTAYIVEG. The cysteines at positions 32 and 69 are disulfide-linked. The tract at residues 91–114 is disordered; that stretch reads RNNMIQTKPTGTQQSTNTAVTLTG.

Belongs to the intercrine gamma family.

It localises to the secreted. In terms of biological role, chemotactic activity for lymphocytes but not for monocytes or neutrophils. This Homo sapiens (Human) protein is Cytokine SCM-1 beta (XCL2).